The sequence spans 124 residues: NADH dehydrogenase [ubiquinone] iron-sulfur protein 6, mitochondrial (124 aa).

The transit peptide at 1–28 (MAAVLTFLRFLGRGGAVTRGLPGGARCF) directs the protein to the mitochondrion.

It belongs to the complex I NDUFS6 subunit family. Mammalian complex I is composed of 45 different subunits. This is a component of the iron-sulfur (IP) fragment of the enzyme.

It is found in the mitochondrion inner membrane. Its function is as follows. Accessory subunit of the mitochondrial membrane respiratory chain NADH dehydrogenase (Complex I), that is believed not to be involved in catalysis. Complex I functions in the transfer of electrons from NADH to the respiratory chain. The immediate electron acceptor for the enzyme is believed to be ubiquinone. This chain is NADH dehydrogenase [ubiquinone] iron-sulfur protein 6, mitochondrial (NDUFS6), found in Bos taurus (Bovine).